Consider the following 416-residue polypeptide: Glutamate dehydrogenase A2 (416 aa).

Residue Lys-105 is part of the active site.

This sequence belongs to the Glu/Leu/Phe/Val dehydrogenases family. As to quaternary structure, homohexamer.

The protein is Glutamate dehydrogenase A2 (gdhA2) of Halobacterium salinarum (strain ATCC 700922 / JCM 11081 / NRC-1) (Halobacterium halobium).